Here is a 215-residue protein sequence, read N- to C-terminus: Cytochrome b6 (215 aa).

Residues 32–52 (IFYCLGGITLTCFLVQVATGF) form a helical membrane-spanning segment. Heme c is bound at residue C35. H86 and H100 together coordinate heme b. The next 3 helical transmembrane spans lie at 90-110 (ASMM…TGGF), 116-136 (LTWV…VTGY), and 186-206 (LHTF…FLMI). Heme b contacts are provided by H187 and H202.

This sequence belongs to the cytochrome b family. PetB subfamily. The 4 large subunits of the cytochrome b6-f complex are cytochrome b6, subunit IV (17 kDa polypeptide, PetD), cytochrome f and the Rieske protein, while the 4 small subunits are PetG, PetL, PetM and PetN. The complex functions as a dimer. It depends on heme b as a cofactor. The cofactor is heme c.

It localises to the plastid. The protein resides in the chloroplast thylakoid membrane. In terms of biological role, component of the cytochrome b6-f complex, which mediates electron transfer between photosystem II (PSII) and photosystem I (PSI), cyclic electron flow around PSI, and state transitions. This chain is Cytochrome b6, found in Pinus koraiensis (Korean pine).